Consider the following 220-residue polypeptide: Octanoyltransferase (220 aa).

The BPL/LPL catalytic domain occupies 31–206; sequence DDTPDEVWLV…ELVTLLDYEQ (176 aa). Substrate is bound by residues 70–77, 137–139, and 150–152; these read RGGQVTYH, SLG, and GLA. Cysteine 168 acts as the Acyl-thioester intermediate in catalysis.

Belongs to the LipB family.

Its subcellular location is the cytoplasm. It catalyses the reaction octanoyl-[ACP] + L-lysyl-[protein] = N(6)-octanoyl-L-lysyl-[protein] + holo-[ACP] + H(+). The protein operates within protein modification; protein lipoylation via endogenous pathway; protein N(6)-(lipoyl)lysine from octanoyl-[acyl-carrier-protein]: step 1/2. Functionally, catalyzes the transfer of endogenously produced octanoic acid from octanoyl-acyl-carrier-protein onto the lipoyl domains of lipoate-dependent enzymes. Lipoyl-ACP can also act as a substrate although octanoyl-ACP is likely to be the physiological substrate. In Vibrio campbellii (strain ATCC BAA-1116), this protein is Octanoyltransferase.